The primary structure comprises 95 residues: Osteocalcin-related protein (95 aa).

The signal sequence occupies residues 1 to 23; the sequence is MRTLSLLTLLALAALCLSDLTDA. A propeptide spanning residues 24 to 49 is cleaved from the precursor; it reads TPTGPESDKAFMSKQEGNKVVNRLRR. The Gla domain occupies 46–92; the sequence is RLRRYLGASVPSPDPLEPTRELCELDPACDELSNQYGLKTAYRRIYG. The Ca(2+) site is built by Glu62, Glu66, Glu69, and Asp75. Residues Glu66 and Glu69 each carry the 4-carboxyglutamate modification. The cysteines at positions 68 and 74 are disulfide-linked.

Belongs to the osteocalcin/matrix Gla protein family. In terms of processing, gamma-carboxyglutamic acid residues are formed by vitamin K dependent carboxylation. These residues are essential for the binding of calcium. As to expression, expressed in kidney and lung, but not in bone.

It is found in the secreted. In terms of biological role, binds strongly to apatite and calcium. This is Osteocalcin-related protein from Mus musculus (Mouse).